The primary structure comprises 216 residues: Probable nicotinate-nucleotide adenylyltransferase (216 aa).

This sequence belongs to the NadD family.

It carries out the reaction nicotinate beta-D-ribonucleotide + ATP + H(+) = deamido-NAD(+) + diphosphate. It participates in cofactor biosynthesis; NAD(+) biosynthesis; deamido-NAD(+) from nicotinate D-ribonucleotide: step 1/1. Its function is as follows. Catalyzes the reversible adenylation of nicotinate mononucleotide (NaMN) to nicotinic acid adenine dinucleotide (NaAD). The sequence is that of Probable nicotinate-nucleotide adenylyltransferase from Buchnera aphidicola subsp. Schizaphis graminum (strain Sg).